Here is a 573-residue protein sequence, read N- to C-terminus: Sulfite reductase [NADPH] hemoprotein beta-component (573 aa).

Residues C438, C444, C483, and C487 each coordinate [4Fe-4S] cluster. Residue C487 participates in siroheme binding.

The protein belongs to the nitrite and sulfite reductase 4Fe-4S domain family. As to quaternary structure, alpha(8)-beta(8). The alpha component is a flavoprotein, the beta component is a hemoprotein. Siroheme serves as cofactor. Requires [4Fe-4S] cluster as cofactor.

The enzyme catalyses hydrogen sulfide + 3 NADP(+) + 3 H2O = sulfite + 3 NADPH + 4 H(+). It functions in the pathway sulfur metabolism; hydrogen sulfide biosynthesis; hydrogen sulfide from sulfite (NADPH route): step 1/1. Functionally, component of the sulfite reductase complex that catalyzes the 6-electron reduction of sulfite to sulfide. This is one of several activities required for the biosynthesis of L-cysteine from sulfate. The chain is Sulfite reductase [NADPH] hemoprotein beta-component from Staphylococcus haemolyticus (strain JCSC1435).